A 401-amino-acid chain; its full sequence is Heparan-sulfate 6-O-sulfotransferase 1 (401 aa).

Over 1–4 (MVER) the chain is Cytoplasmic. A helical; Signal-anchor for type II membrane protein membrane pass occupies residues 5 to 27 (ASKFVLVVAGSACFMLILYQYAG). Residues 28–401 (PGLSLGAPGG…DYMSHIIEKW (374 aa)) lie on the Lumenal side of the membrane. 83-91 (HIQKTGGTT) is a binding site for 3'-phosphoadenylyl sulfate. Residues 113–114 (KK), Arg130, Trp135, and His140 contribute to the substrate site. Residue His140 is the Proton acceptor of the active site. 3'-phosphoadenylyl sulfate-binding residues include Arg175 and Ser183. The substrate site is built by His187 and Trp194. The N-linked (GlcNAc...) asparagine glycan is linked to Asn254. Position 307–309 (307–309 (MQY)) interacts with 3'-phosphoadenylyl sulfate. A glycan (N-linked (GlcNAc...) asparagine) is linked at Asn310. 313–314 (RA) contributes to the 3'-phosphoadenylyl sulfate binding site. A disordered region spans residues 367–389 (ERLLHRSKEALPREDTEEPGRVP).

Belongs to the sulfotransferase 6 family. N-glycosylated.

It localises to the membrane. The enzyme catalyses alpha-D-glucosaminyl-[heparan sulfate](n) + 3'-phosphoadenylyl sulfate = 6-sulfo-alpha-D-glucosaminyl-[heparan sulfate](n) + adenosine 3',5'-bisphosphate + H(+). Inhibited by dithiothreitol and stimulated by protamine. Its function is as follows. 6-O-sulfation enzyme which catalyzes the transfer of sulfate from 3'-phosphoadenosine 5'-phosphosulfate (PAPS) to position 6 of the N-sulfoglucosamine residue (GlcNS) of heparan sulfate. Also transfers sulfate to CDSNS-heparin and performs the crucial step modification in the biosynthesis of anticoagulant heparan sulfate (HSact). Critical for normal neuronal development where it may play a role in neuron branching. May also play a role in limb development. May prefer iduronic acid. The protein is Heparan-sulfate 6-O-sulfotransferase 1 of Cricetulus griseus (Chinese hamster).